The following is a 318-amino-acid chain: Biotin synthase (318 aa).

The 223-residue stretch at 36–258 (HDPREVQLCT…VATTRILFPD (223 aa)) folds into the Radical SAM core domain. 3 residues coordinate [4Fe-4S] cluster: Cys54, Cys58, and Cys61. Positions 98, 130, 190, and 262 each coordinate [2Fe-2S] cluster.

This sequence belongs to the radical SAM superfamily. Biotin synthase family. In terms of assembly, homodimer. Requires [4Fe-4S] cluster as cofactor. [2Fe-2S] cluster is required as a cofactor.

The catalysed reaction is (4R,5S)-dethiobiotin + (sulfur carrier)-SH + 2 reduced [2Fe-2S]-[ferredoxin] + 2 S-adenosyl-L-methionine = (sulfur carrier)-H + biotin + 2 5'-deoxyadenosine + 2 L-methionine + 2 oxidized [2Fe-2S]-[ferredoxin]. It participates in cofactor biosynthesis; biotin biosynthesis; biotin from 7,8-diaminononanoate: step 2/2. Catalyzes the conversion of dethiobiotin (DTB) to biotin by the insertion of a sulfur atom into dethiobiotin via a radical-based mechanism. The sequence is that of Biotin synthase from Gloeobacter violaceus (strain ATCC 29082 / PCC 7421).